A 282-amino-acid chain; its full sequence is MAFDWFKRKTKNITTSTEDKKDVPKGLWHQTPTGKIIEHEELKANNYVSPEDGFHVRIGSREFFSILFDDNKFTELDANVESVDMLGFKDTKAYVDRLKEVKAKTKLTDSIRNAVGRVNGEQMVISCMDFAFIGGSLGSVMGEKIRRAVDYCIANRLPYMIICQSGGARMQEATYSLMQLAKVQAKLAQLSEEGLLYIAYLCDPTFGGITASFAMTADIIMAEPGALIGFAGPRVIRETIGKDLPEGFQTSEFLQEKGFVDFIVKRTEIKEKVSKTVKLLVH.

The CoA carboxyltransferase N-terminal domain maps to 26–282; it reads GLWHQTPTGK…VSKTVKLLVH (257 aa).

Belongs to the AccD/PCCB family. Acetyl-CoA carboxylase is a heterohexamer composed of biotin carboxyl carrier protein (AccB), biotin carboxylase (AccC) and two subunits each of ACCase subunit alpha (AccA) and ACCase subunit beta (AccD).

It localises to the cytoplasm. The enzyme catalyses N(6)-carboxybiotinyl-L-lysyl-[protein] + acetyl-CoA = N(6)-biotinyl-L-lysyl-[protein] + malonyl-CoA. Its pathway is lipid metabolism; malonyl-CoA biosynthesis; malonyl-CoA from acetyl-CoA: step 1/1. In terms of biological role, component of the acetyl coenzyme A carboxylase (ACC) complex. Biotin carboxylase (BC) catalyzes the carboxylation of biotin on its carrier protein (BCCP) and then the CO(2) group is transferred by the transcarboxylase to acetyl-CoA to form malonyl-CoA. The sequence is that of Acetyl-coenzyme A carboxylase carboxyl transferase subunit beta from Flavobacteriaceae bacterium (strain 3519-10).